We begin with the raw amino-acid sequence, 229 residues long: Potassium/proton antiporter CemA (229 aa).

Helical transmembrane passes span 7–27 (FTPL…SFSF), 114–134 (LICF…LVIL), and 189–209 (ILSG…KYWI).

The protein belongs to the CemA family.

Its subcellular location is the plastid. The protein localises to the chloroplast inner membrane. It catalyses the reaction K(+)(in) + H(+)(out) = K(+)(out) + H(+)(in). Functionally, contributes to K(+)/H(+) antiport activity by supporting proton efflux to control proton extrusion and homeostasis in chloroplasts in a light-dependent manner to modulate photosynthesis. Prevents excessive induction of non-photochemical quenching (NPQ) under continuous-light conditions. Indirectly promotes efficient inorganic carbon uptake into chloroplasts. The sequence is that of Potassium/proton antiporter CemA from Ipomoea purpurea (Common morning glory).